A 222-amino-acid polypeptide reads, in one-letter code: Probable transaldolase (222 aa).

Lys91 acts as the Schiff-base intermediate with substrate in catalysis.

This sequence belongs to the transaldolase family. Type 3B subfamily.

It is found in the cytoplasm. The enzyme catalyses D-sedoheptulose 7-phosphate + D-glyceraldehyde 3-phosphate = D-erythrose 4-phosphate + beta-D-fructose 6-phosphate. It participates in carbohydrate degradation; pentose phosphate pathway; D-glyceraldehyde 3-phosphate and beta-D-fructose 6-phosphate from D-ribose 5-phosphate and D-xylulose 5-phosphate (non-oxidative stage): step 2/3. Functionally, transaldolase is important for the balance of metabolites in the pentose-phosphate pathway. This Chlorobium luteolum (strain DSM 273 / BCRC 81028 / 2530) (Pelodictyon luteolum) protein is Probable transaldolase.